The following is a 317-amino-acid chain: E3 ubiquitin-protein ligase NRDP1 (317 aa).

The segment at 18-57 (CPICSGVLEEPVQAPHCEHAFCNACITQWFSQQQTCPVDR) adopts an RING-type; degenerate zinc-finger fold. A coiled-coil region spans residues 135–175 (IKHLRSVVQQQQIRIGELEKTAAESKHQLSEQKRDIQLLKA).

It carries out the reaction S-ubiquitinyl-[E2 ubiquitin-conjugating enzyme]-L-cysteine + [acceptor protein]-L-lysine = [E2 ubiquitin-conjugating enzyme]-L-cysteine + N(6)-ubiquitinyl-[acceptor protein]-L-lysine.. The protein operates within protein modification; protein ubiquitination. Its function is as follows. Acts as E3 ubiquitin-protein ligase and regulates the degradation of target proteins. The protein is E3 ubiquitin-protein ligase NRDP1 (rnf41) of Xenopus laevis (African clawed frog).